Here is a 247-residue protein sequence, read N- to C-terminus: Large ribosomal subunit protein uL24m (247 aa).

The KOW domain maps to 84–117; sequence FFRGDRIEVLVGKDKGKQGIVTQVIPERNWVIVE.

Belongs to the universal ribosomal protein uL24 family. In terms of assembly, component of the mitochondrial ribosome large subunit (39S) which comprises a 16S rRNA and about 50 distinct proteins.

It is found in the mitochondrion. This chain is Large ribosomal subunit protein uL24m (mRpL24), found in Drosophila pseudoobscura pseudoobscura (Fruit fly).